The primary structure comprises 570 residues: Peptidyl-prolyl cis-trans isomerase FKBP9 (570 aa).

An N-terminal signal peptide occupies residues 1–24; sequence MAFRGWRPPPPPLLLLLLWVTGQA. PPIase FKBP-type domains lie at 54-142, 166-254, 278-365, and 389-477; these read GDFV…MDIW, SDFV…LDLH, GDFL…IDFH, and GDYL…LELV. Asn174, Asn286, Asn302, and Asn397 each carry an N-linked (GlcNAc...) asparagine glycan. 2 EF-hand domains span residues 488-523 and 533-568; these read WNGE…QVAS and DAEL…AKHD. Ca(2+)-binding residues include Asp501, Asp503, Asn505, Glu507, Glu512, Asp546, Asn548, Asp550, Lys552, and Glu557. A Prevents secretion from ER motif is present at residues 567-570; that stretch reads HDEL.

Phosphorylated.

The protein localises to the endoplasmic reticulum. The catalysed reaction is [protein]-peptidylproline (omega=180) = [protein]-peptidylproline (omega=0). Inhibited by FK506. PPIases accelerate the folding of proteins during protein synthesis. This is Peptidyl-prolyl cis-trans isomerase FKBP9 (FKBP9) from Homo sapiens (Human).